A 522-amino-acid polypeptide reads, in one-letter code: E3 ubiquitin-protein ligase TRIM65 (522 aa).

N-acetylalanine is present on A2. The segment at 13–52 (CSICLGRYRDPVTLPCGHSFCGNCIQDSWRSCEKSCPECR) adopts an RING-type zinc-finger fold. The B box-type zinc finger occupies 92 to 134 (SHSARCLRHGRPLEFFCRTEGLCVCSACTVHDCSHHERALLDV). Positions 141-229 (DQLRARVLVT…QRLTDHLRAL (89 aa)) form a coiled coil. Phosphoserine is present on S187. One can recognise a B30.2/SPRY domain in the interval 316–509 (APVPSAVCPL…LTLCHQPEAT (194 aa)).

The protein belongs to the TRIM/RBCC family. In terms of assembly, homo-multimerizes. Interacts with ARRDC4.

It localises to the cytoplasm. It carries out the reaction S-ubiquitinyl-[E2 ubiquitin-conjugating enzyme]-L-cysteine + [acceptor protein]-L-lysine = [E2 ubiquitin-conjugating enzyme]-L-cysteine + N(6)-ubiquitinyl-[acceptor protein]-L-lysine.. The protein operates within protein modification; protein ubiquitination. E3 ubiquitin ligase that plays a role in several processes including innate immnity, autophagy or inflammation. Negatively regulates miRNAs by modulating the ubiquitination and stability of TNRC6A, a protein involved in RNA-mediated gene silencing by both micro-RNAs (miRNAs) and short interfering RNAs. This ubiquitination results in the suppressed expression of miR-138-5p leading to increased autophagy. Upon enteroviral infection, promotes 'Lys-63'-mediated ubiquitination activation of IFIH1/MDA5 leading to innate signaling cascade. Mechanistically, selectively recognizes MDA5 filaments that occur on dsRNAs. Also plays a role in limitation of inflammation through different mechanisms. First, promotes 'Lys-48'-mediated ubiquitination of VCAM1 leading to its degradation and limitation of LPS-induced lung inflammation. In addition, negatively regulates inflammasome activation by promoting 'lys48'-linked ubiquitination of NLRP3 which is critical for the inhibition of NLRP3 inflammasome activation in resting macrophages. This is E3 ubiquitin-protein ligase TRIM65 (Trim65) from Mus musculus (Mouse).